The following is a 200-amino-acid chain: Recombination protein RecR (200 aa).

The C4-type zinc-finger motif lies at 58–73 (CSVCGNLTDTDPCFIC). Positions 81-176 (DLLCVVERPR…SVTRIAHGLP (96 aa)) constitute a Toprim domain.

It belongs to the RecR family.

In terms of biological role, may play a role in DNA repair. It seems to be involved in an RecBC-independent recombinational process of DNA repair. It may act with RecF and RecO. In Pelotomaculum thermopropionicum (strain DSM 13744 / JCM 10971 / SI), this protein is Recombination protein RecR.